The primary structure comprises 705 residues: Ribosomal RNA large subunit methyltransferase K/L (705 aa).

Positions 43-154 (VVYRCCLWSR…GEKGILGFDL (112 aa)) constitute a THUMP domain.

This sequence belongs to the methyltransferase superfamily. RlmKL family.

Its subcellular location is the cytoplasm. The enzyme catalyses guanosine(2445) in 23S rRNA + S-adenosyl-L-methionine = N(2)-methylguanosine(2445) in 23S rRNA + S-adenosyl-L-homocysteine + H(+). The catalysed reaction is guanosine(2069) in 23S rRNA + S-adenosyl-L-methionine = N(2)-methylguanosine(2069) in 23S rRNA + S-adenosyl-L-homocysteine + H(+). Functionally, specifically methylates the guanine in position 2445 (m2G2445) and the guanine in position 2069 (m7G2069) of 23S rRNA. The chain is Ribosomal RNA large subunit methyltransferase K/L from Aliivibrio fischeri (strain MJ11) (Vibrio fischeri).